Here is a 38-residue protein sequence, read N- to C-terminus: MGYINVFAFPFTIYSLLLCRMNSRNYIAQVDVVNFNLT.

Binds host ZYG11B. This would not play any role in SARS-CoV-2 infection.

The polypeptide is Putative ORF10 protein (Severe acute respiratory syndrome coronavirus 2 (2019-nCoV)).